Consider the following 188-residue polypeptide: Inosine triphosphate pyrophosphatase (188 aa).

12-17 (TGNANK) provides a ligand contact to ITP. Glu40 is a Mg(2+) binding site. Residues Lys52, 68–69 (DT), Lys85, 144–147 (FGWD), Lys165, and 170–171 (HR) contribute to the ITP site.

It belongs to the HAM1 NTPase family. As to quaternary structure, homodimer. The cofactor is Mg(2+). Mn(2+) is required as a cofactor.

It is found in the cytoplasm. The protein resides in the nucleus. It catalyses the reaction ITP + H2O = IMP + diphosphate + H(+). It carries out the reaction dITP + H2O = dIMP + diphosphate + H(+). The enzyme catalyses XTP + H2O = XMP + diphosphate + H(+). Its function is as follows. Pyrophosphatase that hydrolyzes non-canonical purine nucleotides such as inosine triphosphate (ITP), deoxyinosine triphosphate (dITP) or xanthosine 5'-triphosphate (XTP) to their respective monophosphate derivatives. The enzyme does not distinguish between the deoxy- and ribose forms. Probably excludes non-canonical purines from RNA and DNA precursor pools, thus preventing their incorporation into RNA and DNA and avoiding chromosomal lesions. In Podospora anserina (strain S / ATCC MYA-4624 / DSM 980 / FGSC 10383) (Pleurage anserina), this protein is Inosine triphosphate pyrophosphatase.